The chain runs to 375 residues: Tyrosine--tRNA ligase (375 aa).

Residues Tyr37, Tyr168, Gln172, Asp175, and Gln190 each contribute to the L-tyrosine site. The short motif at 251–255 is the 'KMSKS' region element; that stretch reads KMSKS. Residue Lys254 participates in ATP binding.

The protein belongs to the class-I aminoacyl-tRNA synthetase family. TyrS type 4 subfamily. As to quaternary structure, homodimer.

It localises to the cytoplasm. The catalysed reaction is tRNA(Tyr) + L-tyrosine + ATP = L-tyrosyl-tRNA(Tyr) + AMP + diphosphate + H(+). Catalyzes the attachment of tyrosine to tRNA(Tyr) in a two-step reaction: tyrosine is first activated by ATP to form Tyr-AMP and then transferred to the acceptor end of tRNA(Tyr). The protein is Tyrosine--tRNA ligase of Pyrococcus abyssi (strain GE5 / Orsay).